A 212-amino-acid chain; its full sequence is Mediator of RNA polymerase II transcription subunit 20 (212 aa).

It belongs to the Mediator complex subunit 20 family. As to quaternary structure, component of the Mediator complex, which is composed of MED1, MED4, MED6, MED7, MED8, MED9, MED10, MED11, MED12, MED13, MED13L, MED14, MED15, MED16, MED17, MED18, MED19, MED20, MED21, MED22, MED23, MED24, MED25, MED26, MED27, MED29, MED30, MED31, CCNC, CDK8 and CDC2L6/CDK11. The MED12, MED13, CCNC and CDK8 subunits form a distinct module termed the CDK8 module. Mediator containing the CDK8 module is less active than Mediator lacking this module in supporting transcriptional activation. Individual preparations of the Mediator complex lacking one or more distinct subunits have been variously termed ARC, CRSP, DRIP, PC2, SMCC and TRAP. Interacts with PPARG.

The protein resides in the nucleus. Component of the Mediator complex, a coactivator involved in the regulated transcription of nearly all RNA polymerase II-dependent genes. Mediator functions as a bridge to convey information from gene-specific regulatory proteins to the basal RNA polymerase II transcription machinery. Mediator is recruited to promoters by direct interactions with regulatory proteins and serves as a scaffold for the assembly of a functional preinitiation complex with RNA polymerase II and the general transcription factors. The chain is Mediator of RNA polymerase II transcription subunit 20 (Med20) from Rattus norvegicus (Rat).